A 318-amino-acid chain; its full sequence is Dehydrogenase/reductase SDR family member 7C-B (318 aa).

The signal sequence occupies residues 1 to 32 (MGMSDIMWLDVSWAWLVLTAVLLAAAVFYLYT). 49–73 (LITDSLSTVGNECAKLFHAGGARLI) serves as a coordination point for NAD(+). S186 serves as a coordination point for substrate. Residue Y199 is the Proton acceptor of the active site.

The protein belongs to the short-chain dehydrogenases/reductases (SDR) family.

It is found in the secreted. Its function is as follows. Putative oxidoreductase. This chain is Dehydrogenase/reductase SDR family member 7C-B (dhrs7cb), found in Danio rerio (Zebrafish).